We begin with the raw amino-acid sequence, 88 residues long: Small ribosomal subunit protein bS16 (88 aa).

The protein belongs to the bacterial ribosomal protein bS16 family.

In Baumannia cicadellinicola subsp. Homalodisca coagulata, this protein is Small ribosomal subunit protein bS16.